The following is a 331-amino-acid chain: Small ribosomal subunit protein uS2 (331 aa).

Belongs to the universal ribosomal protein uS2 family.

In Rhodopseudomonas palustris (strain BisB5), this protein is Small ribosomal subunit protein uS2.